Consider the following 430-residue polypeptide: Bystin (430 aa).

2 stretches are compositionally biased toward basic residues: residues 1–12 (MGKDKKDRKHKG) and 26–35 (PSKRVKHRRE). 2 disordered regions span residues 1–45 (MGKD…ESFV) and 65–113 (MEEY…SETY). The span at 68-78 (YGFRKTGDRKT) shows a compositional bias: basic and acidic residues. Residues 93–104 (RIDDDDEDDSDD) show a composition bias toward acidic residues.

The protein belongs to the bystin family.

It is found in the nucleus. The protein localises to the nucleolus. Its function is as follows. Required for processing of 20S pre-rRNA precursor and biogenesis of 40S ribosomal subunits. The sequence is that of Bystin (bysl) from Nematostella vectensis (Starlet sea anemone).